The primary structure comprises 150 residues: Globin-3 (150 aa).

The Globin domain maps to 11–150; sequence PLSAAEKTKI…MICILLRSAY (140 aa). Residues His-74 and His-106 each contribute to the heme b site.

The protein belongs to the globin family. In terms of assembly, monomer.

The protein is Globin-3 of Petromyzon marinus (Sea lamprey).